The sequence spans 462 residues: Histidine--tRNA ligase (462 aa).

The protein belongs to the class-II aminoacyl-tRNA synthetase family. Homodimer.

The protein resides in the cytoplasm. It carries out the reaction tRNA(His) + L-histidine + ATP = L-histidyl-tRNA(His) + AMP + diphosphate + H(+). This chain is Histidine--tRNA ligase (hisS), found in Nostoc sp. (strain PCC 7120 / SAG 25.82 / UTEX 2576).